The sequence spans 64 residues: Large ribosomal subunit protein bL35 (64 aa).

The interval 1–23 is disordered; the sequence is MPKMKTKSGAAKRFKKTANGFKH.

This sequence belongs to the bacterial ribosomal protein bL35 family.

The polypeptide is Large ribosomal subunit protein bL35 (Stutzerimonas stutzeri (strain A1501) (Pseudomonas stutzeri)).